Consider the following 476-residue polypeptide: UDP-N-acetylmuramate--L-alanine ligase (476 aa).

107 to 113 (GTHGKTT) is an ATP binding site.

It belongs to the MurCDEF family.

The protein localises to the cytoplasm. The enzyme catalyses UDP-N-acetyl-alpha-D-muramate + L-alanine + ATP = UDP-N-acetyl-alpha-D-muramoyl-L-alanine + ADP + phosphate + H(+). It participates in cell wall biogenesis; peptidoglycan biosynthesis. Functionally, cell wall formation. This Roseiflexus castenholzii (strain DSM 13941 / HLO8) protein is UDP-N-acetylmuramate--L-alanine ligase.